We begin with the raw amino-acid sequence, 247 residues long: NAD(P)H-quinone oxidoreductase subunit K (247 aa).

Residues C63, C64, C128, and C159 each coordinate [4Fe-4S] cluster.

It belongs to the complex I 20 kDa subunit family. In terms of assembly, NDH-1 can be composed of about 15 different subunits; different subcomplexes with different compositions have been identified which probably have different functions. It depends on [4Fe-4S] cluster as a cofactor.

It is found in the cellular thylakoid membrane. It catalyses the reaction a plastoquinone + NADH + (n+1) H(+)(in) = a plastoquinol + NAD(+) + n H(+)(out). It carries out the reaction a plastoquinone + NADPH + (n+1) H(+)(in) = a plastoquinol + NADP(+) + n H(+)(out). In terms of biological role, NDH-1 shuttles electrons from an unknown electron donor, via FMN and iron-sulfur (Fe-S) centers, to quinones in the respiratory and/or the photosynthetic chain. The immediate electron acceptor for the enzyme in this species is believed to be plastoquinone. Couples the redox reaction to proton translocation, and thus conserves the redox energy in a proton gradient. Cyanobacterial NDH-1 also plays a role in inorganic carbon-concentration. The sequence is that of NAD(P)H-quinone oxidoreductase subunit K from Gloeothece citriformis (strain PCC 7424) (Cyanothece sp. (strain PCC 7424)).